The primary structure comprises 570 residues: Probable metalloreductase AIM14 (570 aa).

The Extracellular portion of the chain corresponds to 1 to 20 (MKESPLITLVKRHSETHFAN). The helical transmembrane segment at 21–41 (IKYGYYVLIISLVYLIGLALL) threads the bilayer. At 42–69 (RAFGRRTPSRSSSAFKNKIIYRLYDIDP) the chain is on the cytoplasmic side. The helical transmembrane segment at 70 to 90 (AIHLGILFFAVLIPFYYHYSL) threads the bilayer. The Extracellular portion of the chain corresponds to 91–141 (TTQSTVYLKRLGRLSYALIPLNLFLTLRPNWFLRKNCTYTDFIPFHKWFSR). Residues 101 to 219 (LGRLSYALIP…NLVNVAFILL (119 aa)) form the Ferric oxidoreductase domain. A helical transmembrane segment spans residues 142–162 (IITVIGLLHGIFFIIKWAIDD). The Cytoplasmic portion of the chain corresponds to 163-176 (NVSLKQKLILKTFN). A helical transmembrane segment spans residues 177-197 (FAGFIISILVLFLLICSIGPM). The Extracellular segment spans residues 198 to 373 (RRYNYRLFYI…PEECYSQGTN (176 aa)). The FAD-binding FR-type domain occupies 250–388 (FAKSLMILNK…GGSGISFALP (139 aa)). The chain crosses the membrane as a helical span at residues 374 to 394 (IAIICGGSGISFALPLFRHFF). Topologically, residues 395 to 570 (NKENVKYLKM…INFVCETYGL (176 aa)) are cytoplasmic. The span at 480-505 (ISNFNSENADSNDNTPETSHSPTKEN) shows a compositional bias: polar residues. Residues 480–509 (ISNFNSENADSNDNTPETSHSPTKENGSMI) are disordered.

The protein belongs to the ferric reductase (FRE) family. AIM14 subfamily. Interacts with ribosomes.

The protein localises to the membrane. Probable cell surface metalloreductase. May be involved in iron or copper homeostasis. This chain is Probable metalloreductase AIM14 (AIM14), found in Saccharomyces cerevisiae (strain ATCC 204508 / S288c) (Baker's yeast).